Reading from the N-terminus, the 102-residue chain is Biotrophy-associated secreted protein 4 (102 aa).

The first 21 residues, 1 to 21 (MQLSFSAIAILLAFAVNHATA), serve as a signal peptide directing secretion. N-linked (GlcNAc...) asparagine glycosylation occurs at asparagine 36.

It is found in the secreted. Its function is as follows. Secreted effector involved in biotrophic colonization of plant cells. Participates in transition from the biotrophic to the necrotrophic phase of Magnaporthe oryzae. Elicits rice basic defense responses during the early stage of interaction and promotes cell death in the late stage of compatible interaction. This is Biotrophy-associated secreted protein 4 from Pyricularia oryzae (strain 70-15 / ATCC MYA-4617 / FGSC 8958) (Rice blast fungus).